The following is a 205-amino-acid chain: Recombination protein RecR (205 aa).

A C4-type zinc finger spans residues 58 to 73 (CKKCHTISDHELCAIC). One can recognise a Toprim domain in the interval 81-177 (RVVCIVEDIR…KISTIARGIP (97 aa)).

The protein belongs to the RecR family.

Functionally, may play a role in DNA repair. It seems to be involved in an RecBC-independent recombinational process of DNA repair. It may act with RecF and RecO. This Cytophaga hutchinsonii (strain ATCC 33406 / DSM 1761 / CIP 103989 / NBRC 15051 / NCIMB 9469 / D465) protein is Recombination protein RecR.